The chain runs to 264 residues: ATP synthase subunit a (264 aa).

6 helical membrane passes run 27–47, 87–107, 131–151, 172–192, 196–216, and 230–250; these read VHLD…FVFS, VGPL…IDLI, DISG…FYTI, LLIP…PVSL, LFGN…MYMA, and LAWA…FMML.

The protein belongs to the ATPase A chain family. As to quaternary structure, F-type ATPases have 2 components, CF(1) - the catalytic core - and CF(0) - the membrane proton channel. CF(1) has five subunits: alpha(3), beta(3), gamma(1), delta(1), epsilon(1). CF(0) has three main subunits: a(1), b(2) and c(9-12). The alpha and beta chains form an alternating ring which encloses part of the gamma chain. CF(1) is attached to CF(0) by a central stalk formed by the gamma and epsilon chains, while a peripheral stalk is formed by the delta and b chains.

Its subcellular location is the cell inner membrane. In terms of biological role, key component of the proton channel; it plays a direct role in the translocation of protons across the membrane. In Pasteurella multocida (strain Pm70), this protein is ATP synthase subunit a.